A 375-amino-acid polypeptide reads, in one-letter code: Pulmonary surfactant-associated protein D (375 aa).

The first 20 residues, 1–20 (MLLFLLSALVLLTQPLGYLE), serve as a signal peptide directing secretion. Cysteine 35 and cysteine 40 each carry S-nitrosocysteine. The disordered stretch occupies residues 45-221 (SGLPGRDGRD…DKGAKGESGL (177 aa)). One can recognise a Collagen-like domain in the interval 46 to 222 (GLPGRDGRDG…KGAKGESGLP (177 aa)). Residues 50 to 65 (RDGRDGREGPRGEKGD) show a composition bias toward basic and acidic residues. Over residues 66–86 (PGLPGAAGQAGMPGQAGPVGP) the composition is skewed to low complexity. The residue at position 78 (proline 78) is a 4-hydroxyproline. The residue at position 87 (lysine 87) is a 5-hydroxylysine. Residue asparagine 90 is glycosylated (N-linked (GlcNAc...) asparagine). Position 96 is a 4-hydroxyproline (proline 96). Lysine 99 carries the post-translational modification 5-hydroxylysine. A compositionally biased stretch (pro residues) spans 105 to 114 (SGPPGPPGVP). Low complexity-rich tracts occupy residues 116-132 (PAGR…IGPQ) and 138-150 (KGEA…VGAP). Residues proline 171 and proline 177 each carry the 4-hydroxyproline modification. Over residues 204-216 (KGDKGIPGDKGAK) the composition is skewed to basic and acidic residues. Residues 223-252 (DVASLRQQVEALQGQVQHLQAAFSQYKKVE) adopt a coiled-coil conformation. One can recognise a C-type lectin domain in the interval 260–375 (VGEKIFKTAG…GEKRLVVCEF (116 aa)). Disulfide bonds link cysteine 281-cysteine 373 and cysteine 351-cysteine 365.

This sequence belongs to the SFTPD family. As to quaternary structure, oligomeric complex of 4 set of homotrimers. Post-translationally, the N-terminus is blocked. In terms of processing, hydroxylation on proline residues within the sequence motif, GXPG, is most likely to be 4-hydroxy as this fits the requirement for 4-hydroxylation in vertebrates. S-nitrosylation at Cys-35 and Cys-40 alters the quaternary structure which results in a pro-inflammatory chemoattractive signaling activity with macrophages. Expressed in lung, brain, pancreas and adipose tissue (mainly mature adipocytes).

Its subcellular location is the secreted. The protein localises to the extracellular space. The protein resides in the extracellular matrix. It is found in the surface film. Functionally, contributes to the lung's defense against inhaled microorganisms, organic antigens and toxins. Interacts with compounds such as bacterial lipopolysaccharides, oligosaccharides and fatty acids and modulates leukocyte action in immune response. May participate in the extracellular reorganization or turnover of pulmonary surfactant. Binds strongly maltose residues and to a lesser extent other alpha-glucosyl moieties. This is Pulmonary surfactant-associated protein D (SFTPD) from Homo sapiens (Human).